Consider the following 218-residue polypeptide: Pyridoxine/pyridoxamine 5'-phosphate oxidase (218 aa).

Residues 14–17 (RREY) and K72 each bind substrate. Residues 67-72 (RIVLLK), 82-83 (YT), R88, K89, and Q111 contribute to the FMN site. Substrate is bound by residues Y129, R133, and S137. FMN-binding positions include 146-147 (QS) and W191. Residue 197–199 (RLH) participates in substrate binding. Position 201 (R201) interacts with FMN.

Belongs to the pyridoxamine 5'-phosphate oxidase family. Homodimer. Requires FMN as cofactor.

The catalysed reaction is pyridoxamine 5'-phosphate + O2 + H2O = pyridoxal 5'-phosphate + H2O2 + NH4(+). It carries out the reaction pyridoxine 5'-phosphate + O2 = pyridoxal 5'-phosphate + H2O2. Its pathway is cofactor metabolism; pyridoxal 5'-phosphate salvage; pyridoxal 5'-phosphate from pyridoxamine 5'-phosphate: step 1/1. The protein operates within cofactor metabolism; pyridoxal 5'-phosphate salvage; pyridoxal 5'-phosphate from pyridoxine 5'-phosphate: step 1/1. Its function is as follows. Catalyzes the oxidation of either pyridoxine 5'-phosphate (PNP) or pyridoxamine 5'-phosphate (PMP) into pyridoxal 5'-phosphate (PLP). The sequence is that of Pyridoxine/pyridoxamine 5'-phosphate oxidase from Salmonella typhi.